The primary structure comprises 627 residues: Protein fem-1 homolog B (627 aa).

ANK repeat units follow at residues 45–74 (QRSTPLIIAARNGHAKVVRLLLEHYRVQTQ), 87–116 (DGATALWCAAGAGHFEVVKLLVSHGANVNH), 120–149 (TNSTPLRAACFDGRLDIVKYLVENNANISI), and 153–182 (YDNTCLMIAAYKGHTDVVRYLLEQRADPNA). Residues H185, C186, and H218 each contribute to the Zn(2+) site. ANK repeat units follow at residues 186 to 215 (CGATALHFAAEAGHIDIVKELIKWRAAIVV) and 218 to 248 (HGMTPLKVAAESCKADVVELLLSHADCDRRS). The stretch at 344–377 (SHPIIYRGAVYADNMEFEQCIKLWLHALHLRQKG) is one TPR repeat. ANK repeat units follow at residues 483–527 (EGFT…EVNA) and 531–568 (EGNSALHIIVQYNRPISDFLTLHSIIISLVEAGAHTDM).

This sequence belongs to the fem-1 family. As to quaternary structure, component of a CRL2 E3 ubiquitin-protein ligase complex, also named ECS (Elongin BC-CUL2/5-SOCS-box protein) complex, composed of CUL2, Elongin BC (ELOB and ELOC), RBX1 and substrate-specific adapter FEM1B. Homooligomer. Interacts with PPM1F and PHTF1. Interacts with the death domain of FAS/TNFRSF6 and TNFRSF1A. Interacts with CHEK1. Interacts with NKX3-1. Present in adult testis (at protein level).

It is found in the cytoplasm. The protein localises to the nucleus. The protein operates within protein modification; protein ubiquitination. With respect to regulation, activity of the CRL2(FEM1B) complex toward FNIP1 is inhibited by BEX family proteins (BEX1, BEX2, BEX3 and/or BEX4) in absence of reductive stress. Mechanistically, BEX proteins act as pseudosubstrate inhibitors that associate with FEM1B via zinc in absence of reductive stress, thereby preventing association between FEM1B and FNIP1. Its function is as follows. Substrate-recognition component of a Cul2-RING (CRL2) E3 ubiquitin-protein ligase complex of the DesCEND (destruction via C-end degrons) pathway, which recognizes a C-degron located at the extreme C terminus of target proteins, leading to their ubiquitination and degradation. The C-degron recognized by the DesCEND pathway is usually a motif of less than ten residues and can be present in full-length proteins, truncated proteins or proteolytically cleaved forms. The CRL2(FEM1B) complex specifically recognizes proteins ending with -Gly-Leu-Asp-Arg, such as CDK5R1, leading to their ubiquitination and degradation. Also acts as a regulator of the reductive stress response by mediating ubiquitination of reduced FNIP1: in response to reductive stress, the CRL2(FEM1B) complex specifically recognizes a conserved Cys degron in FNIP1 when this degron is reduced, leading to FNIP1 degradation and subsequent activation of mitochondria to recalibrate reactive oxygen species (ROS). Mechanistically, recognizes and binds reduced FNIP1 through two interface zinc ions, which act as a molecular glue that recruit reduced FNIP1 to FEM1B. Promotes ubiquitination of GLI1, suppressing GLI1 transcriptional activator activity. Promotes ubiquitination and degradation of ANKRD37. Promotes ubiquitination and degradation of SLBP. Involved in apoptosis by acting as a death receptor-associated protein that mediates apoptosis. Also involved in glucose homeostasis in pancreatic islet. May also act as an adapter/mediator in replication stress-induced signaling that leads to the activation of CHEK1. This Rattus norvegicus (Rat) protein is Protein fem-1 homolog B.